Here is a 648-residue protein sequence, read N- to C-terminus: MHYYGNRNEYDILNASSNDSNMSNTYPRYPLANPQQDLMQNTNYKDWLNVCEGYHIENPREASVRAGLGKGLGIVSTIVGFFGGSIILDTIGLFYQISELLWPEDDTQQYTWQDIMNHVEDLIDKRITEVIRGNAIRTLADLQGKVDDYNNWLKKWKDDPKSTGNLSTLVTKFTALDSDFNGAIRTVNNQGSPGYELLLLPVYAQIANLHLLLLRDAQIYGDKWWSARANARDNYYQIQLEKTKEYTEYCINWYNKGLNDFRTAGQWVNFNRYRREMTLTVLDIISMFPIYDARLYPTEVKTELTREIYSDVINGEIYGLMTPYFSFEKAESLYTRAPHLFTWLKGFRFVTNSISYWTFLSGGQNKYSYTNNSSINEGSFRGQDTDYGGTSSTINIPSNSYVYNLWTENYEYIYPWGDPVNITKMNFSVTDNNSSKELIYGAHRTNKPVVRTDFDFLTNKEGTELAKYNDYNHILSYMLINGETFGQKRHGYSFAFTHSSVDPNNTIAANKITQIPVVKASSINGSISIEKGPGFTGGDLVKMRADSGLTMRFKAELLDKKYRVRIRYKCNYSSKLILRKWKGEGYIQQQIHNISPTYGAFSYLESFTITTTENIFDLTMEVTYPYGRQFVEDIPSLILDKIEFLPTN.

Belongs to the delta endotoxin family.

In terms of biological role, promotes colloidosmotic lysis by binding to the midgut epithelial cells of mosquitos. This Bacillus thuringiensis subsp. jegathesan protein is Pesticidal crystal protein Cry19Aa (cry19Aa).